We begin with the raw amino-acid sequence, 449 residues long: CCA-adding enzyme (449 aa).

Ser57 and Arg60 together coordinate ATP. The CTP site is built by Ser57 and Arg60. Mg(2+) contacts are provided by Asp69, Asp71, and Asp124. Residues His147, Lys167, and Tyr176 each contribute to the ATP site. CTP is bound by residues His147, Lys167, and Tyr176.

The protein belongs to the tRNA nucleotidyltransferase/poly(A) polymerase family. Archaeal CCA-adding enzyme subfamily. As to quaternary structure, homodimer. Mg(2+) serves as cofactor.

The enzyme catalyses a tRNA precursor + 2 CTP + ATP = a tRNA with a 3' CCA end + 3 diphosphate. The catalysed reaction is a tRNA with a 3' CCA end + 2 CTP + ATP = a tRNA with a 3' CCACCA end + 3 diphosphate. Functionally, catalyzes the addition and repair of the essential 3'-terminal CCA sequence in tRNAs without using a nucleic acid template. Adds these three nucleotides in the order of C, C, and A to the tRNA nucleotide-73, using CTP and ATP as substrates and producing inorganic pyrophosphate. tRNA 3'-terminal CCA addition is required both for tRNA processing and repair. Also involved in tRNA surveillance by mediating tandem CCA addition to generate a CCACCA at the 3' terminus of unstable tRNAs. While stable tRNAs receive only 3'-terminal CCA, unstable tRNAs are marked with CCACCA and rapidly degraded. This Methanocaldococcus jannaschii (strain ATCC 43067 / DSM 2661 / JAL-1 / JCM 10045 / NBRC 100440) (Methanococcus jannaschii) protein is CCA-adding enzyme.